The following is a 146-amino-acid chain: MNFLLSWVHWSLALLLYLHHAKWSQAAPMAEGGQKPHEVMKFMDVYQRSFCRPIETLVDIFQEYPDEIEFIFKPSCVPLMRCGGCCNDESLECVPTEEFNITMQIMRIKPHQSQHIGEMSFLQHNKCECRPKKDKARQEKCDKPRR.

The N-terminal stretch at 1 to 26 (MNFLLSWVHWSLALLLYLHHAKWSQA) is a signal peptide. 3 disulfides stabilise this stretch: Cys-51–Cys-93, Cys-82–Cys-127, and Cys-86–Cys-129. N-linked (GlcNAc...) asparagine glycosylation occurs at Asn-100.

It belongs to the PDGF/VEGF growth factor family. As to quaternary structure, homodimer; disulfide-linked. Also found as heterodimer with PGF. Interacts with NRP1. Interacts with isoform 2 of BSG. Interacts with CD82; this interaction inhibits VEGFA-mediated signaling pathway.

Its function is as follows. Growth factor active in angiogenesis, vasculogenesis and endothelial cell growth. Induces endothelial cell proliferation, promotes cell migration, inhibits apoptosis and induces permeabilization of blood vessels. Binds to the FLT1/VEGFR1 and KDR/VEGFR2 receptors, heparan sulfate and heparin. Binding to NRP1 receptor initiates a signaling pathway needed for motor neuron axon guidance and cell body migration, including for the caudal migration of facial motor neurons from rhombomere 4 to rhombomere 6 during embryonic development. Also binds the DEAR/FBXW7-AS1 receptor. This is Vascular endothelial growth factor A (VEGFA) from Ovis aries (Sheep).